We begin with the raw amino-acid sequence, 127 residues long: Aspartate 1-decarboxylase (127 aa).

Serine 25 (schiff-base intermediate with substrate; via pyruvic acid) is an active-site residue. Serine 25 is subject to Pyruvic acid (Ser). Threonine 57 contributes to the substrate binding site. The active-site Proton donor is tyrosine 58. 73–75 lines the substrate pocket; it reads GSA.

This sequence belongs to the PanD family. In terms of assembly, heterooctamer of four alpha and four beta subunits. Pyruvate serves as cofactor. Is synthesized initially as an inactive proenzyme, which is activated by self-cleavage at a specific serine bond to produce a beta-subunit with a hydroxyl group at its C-terminus and an alpha-subunit with a pyruvoyl group at its N-terminus.

Its subcellular location is the cytoplasm. The enzyme catalyses L-aspartate + H(+) = beta-alanine + CO2. It functions in the pathway cofactor biosynthesis; (R)-pantothenate biosynthesis; beta-alanine from L-aspartate: step 1/1. Its function is as follows. Catalyzes the pyruvoyl-dependent decarboxylation of aspartate to produce beta-alanine. The chain is Aspartate 1-decarboxylase from Dechloromonas aromatica (strain RCB).